The chain runs to 327 residues: Tetraacyldisaccharide 4'-kinase (327 aa).

52–59 is an ATP binding site; sequence TLGGAGKT.

It belongs to the LpxK family.

It catalyses the reaction a lipid A disaccharide + ATP = a lipid IVA + ADP + H(+). It participates in glycolipid biosynthesis; lipid IV(A) biosynthesis; lipid IV(A) from (3R)-3-hydroxytetradecanoyl-[acyl-carrier-protein] and UDP-N-acetyl-alpha-D-glucosamine: step 6/6. In terms of biological role, transfers the gamma-phosphate of ATP to the 4'-position of a tetraacyldisaccharide 1-phosphate intermediate (termed DS-1-P) to form tetraacyldisaccharide 1,4'-bis-phosphate (lipid IVA). This is Tetraacyldisaccharide 4'-kinase from Methylorubrum extorquens (strain PA1) (Methylobacterium extorquens).